Here is a 453-residue protein sequence, read N- to C-terminus: MAGAAAGGRGGGAWGPGRGGAGGLRRGCSPPAPAGSPRAGLQPLRATIPFQLQQPHQRRDGGGRAASVPCSVAPEKSVCRPQPLQVRRTFSLDTILSSYLLGQWPRDADGAFTCCTNDKATQTPLSWQELEGERASSCAHKRSASWGSTDHRKEISKLKQQLQRTKLSRSGKEKERGSPLLGDHAVRGALRASPPSFPSGSPVLRLSPCLHRSLEGLNQELEEVFVKEQGEEELLRILDIPDGHRAPAPPQSGSCDHPLLLLEPGNLASSPSMSLASPQPCGLASHEEHRGAAEELASTPNDKASSPGHPAFLEDGSPSPVLAFAASPRPNHSYIFKREPPEGCEKVRVFEEATSPGPDLAFLTSCPDKNKVHFNPTGSAFCPVNLMKPLFPGMGFIFRNCPSNPGSPLPPASPRPPPRKDPEASKASPLPFEPWQRTPPSEEPVLFQSSLMV.

The segment covering 1 to 25 (MAGAAAGGRGGGAWGPGRGGAGGLR) has biased composition (gly residues). Residues 1–45 (MAGAAAGGRGGGAWGPGRGGAGGLRRGCSPPAPAGSPRAGLQPLR) are disordered. S29 and S67 each carry phosphoserine. Residues 149-175 (TDHRKEISKLKQQLQRTKLSRSGKEKE) adopt a coiled-coil conformation. Positions 159–201 (KQQLQRTKLSRSGKEKERGSPLLGDHAVRGALRASPPSFPSGS) are disordered. Phosphoserine is present on residues S178, S193, S201, and S213. Positions 269-278 (SSPSMSLASP) are enriched in low complexity. The tract at residues 269–320 (SSPSMSLASPQPCGLASHEEHRGAAEELASTPNDKASSPGHPAFLEDGSPSP) is disordered. T299 is subject to Phosphothreonine. A phosphoserine mark is found at S319 and S327. T354 is modified (phosphothreonine). Positions 406–416 (GSPLPPASPRP) are enriched in pro residues. The segment at 406-453 (GSPLPPASPRPPPRKDPEASKASPLPFEPWQRTPPSEEPVLFQSSLMV) is disordered. S413 and S428 each carry phosphoserine.

Belongs to the FAM117 family.

The chain is Protein FAM117A (FAM117A) from Homo sapiens (Human).